The following is a 443-amino-acid chain: Phosphoglucosamine mutase (443 aa).

Ser-102 (phosphoserine intermediate) is an active-site residue. Residues Ser-102, Asp-241, Asp-243, and Asp-245 each contribute to the Mg(2+) site. Ser-102 is modified (phosphoserine).

Belongs to the phosphohexose mutase family. The cofactor is Mg(2+). In terms of processing, activated by phosphorylation.

It carries out the reaction alpha-D-glucosamine 1-phosphate = D-glucosamine 6-phosphate. In terms of biological role, catalyzes the conversion of glucosamine-6-phosphate to glucosamine-1-phosphate. The chain is Phosphoglucosamine mutase from Polaromonas naphthalenivorans (strain CJ2).